The primary structure comprises 363 residues: 3-isopropylmalate dehydrogenase (363 aa).

78–91 is a binding site for NAD(+); the sequence is GKKWDYLPIESRPE. Arg99, Arg109, Arg138, and Asp227 together coordinate substrate. The Mg(2+) site is built by Asp227, Asp251, and Asp255. 285 to 297 is a binding site for NAD(+); sequence GSAPDIEGKNIAN.

It belongs to the isocitrate and isopropylmalate dehydrogenases family. LeuB type 1 subfamily. In terms of assembly, homodimer. Requires Mg(2+) as cofactor. It depends on Mn(2+) as a cofactor.

It localises to the cytoplasm. It carries out the reaction (2R,3S)-3-isopropylmalate + NAD(+) = 4-methyl-2-oxopentanoate + CO2 + NADH. It functions in the pathway amino-acid biosynthesis; L-leucine biosynthesis; L-leucine from 3-methyl-2-oxobutanoate: step 3/4. In terms of biological role, catalyzes the oxidation of 3-carboxy-2-hydroxy-4-methylpentanoate (3-isopropylmalate) to 3-carboxy-4-methyl-2-oxopentanoate. The product decarboxylates to 4-methyl-2 oxopentanoate. The sequence is that of 3-isopropylmalate dehydrogenase from Buchnera aphidicola subsp. Schizaphis graminum (strain Sg).